Reading from the N-terminus, the 172-residue chain is Signal peptidase complex catalytic subunit SEC11 (172 aa).

The Cytoplasmic portion of the chain corresponds to 1 to 14 (MLSSLQNPRQAAAQ). The helical; Signal-anchor for type II membrane protein transmembrane segment at 15-35 (LMNFAMILSTAFMMWKGLSVA) threads the bilayer. Over 36 to 172 (TDSPSPIVVV…MGLLVVIQRE (137 aa)) the chain is Lumenal. Active-site charge relay system residues include S49, H90, and D115. The C-terminal short (CTS) helix stretch occupies residues 158 to 169 (VMLGIMGLLVVI).

The protein belongs to the peptidase S26B family. In terms of assembly, component of the signal peptidase complex (SPC) composed of a catalytic subunit SEC11 and three accessory subunits SPC1, SPC2 and SPC3. The complex induces a local thinning of the ER membrane which is used to measure the length of the signal peptide (SP) h-region of protein substrates. This ensures the selectivity of the complex towards h-regions shorter than 18-20 amino acids. SPC associates with the translocon complex.

It localises to the endoplasmic reticulum membrane. It carries out the reaction Cleavage of hydrophobic, N-terminal signal or leader sequences from secreted and periplasmic proteins.. Its function is as follows. Catalytic component of the signal peptidase complex (SPC) which catalyzes the cleavage of N-terminal signal sequences from nascent proteins as they are translocated into the lumen of the endoplasmic reticulum. Specifically cleaves N-terminal signal peptides that contain a hydrophobic alpha-helix (h-region) shorter than 18-20 amino acids. The protein is Signal peptidase complex catalytic subunit SEC11 (SEC11) of Metarhizium robertsii (strain ARSEF 23 / ATCC MYA-3075) (Metarhizium anisopliae (strain ARSEF 23)).